A 294-amino-acid polypeptide reads, in one-letter code: Non-selective voltage-gated ion channel VDAC2 (294 aa).

An N-acetylalanine modification is found at Ala2. The ATP site is built by Lys23 and Lys31. Lys31 carries the post-translational modification N6-acetyllysine; alternate. Lys31 carries the post-translational modification N6-succinyllysine; alternate. A Glycyl lysine isopeptide (Lys-Gly) (interchain with G-Cter in ubiquitin); alternate cross-link involves residue Lys31. Transmembrane regions (beta stranded) follow at residues 37–46 and 50–58; these read LVKLDVKTKS and VEFSTSGSS. Lys64 is covalently cross-linked (Glycyl lysine isopeptide (Lys-Gly) (interchain with G-Cter in ubiquitin)). Residues 65–75 form a beta stranded membrane-spanning segment; that stretch reads VTGTLETKYKW. A Phosphotyrosine modification is found at Tyr78. Beta stranded transmembrane passes span 80–87, 91–100, and 106–115; these read LTFTEKWN, TLGTEIAIED, and LKLTFDTTFS. A Phosphothreonine modification is found at Thr118. Residue Lys120 is modified to N6-acetyllysine; alternate. Lys120 participates in a covalent cross-link: Glycyl lysine isopeptide (Lys-Gly) (interchain with G-Cter in ubiquitin); alternate. Residue Lys121 forms a Glycyl lysine isopeptide (Lys-Gly) (interchain with G-Cter in ubiquitin) linkage. 4 beta stranded membrane passes run 122–131, 134–141, 148–156, and 161–169; these read SGKIKSSYKR, INLGCDVD, AIHGSAVFG, and LAGYQMTFD. Lys172 is covalently cross-linked (Glycyl lysine isopeptide (Lys-Gly) (interchain with G-Cter in ubiquitin)). 6 consecutive transmembrane segments (beta stranded) span residues 174–186, 189–196, 200–209, 213–222, 229–238, and 242–249; these read KLTRNNFAVGYRT, FQLHTNVN, EFGGSIYQKV, LDTSVNLAWT, RFGIAAKYQL, and ASISAKVN. A Phosphoserine modification is found at Ser251. Residues 253–255 and 271–275 contribute to the NAD(+) site; these read LIG and SALVD. 2 consecutive transmembrane segments (beta stranded) span residues 253-262 and 265-274; these read LIGVGYTQTL and GVKLTLSALV. An N6-acetyllysine; alternate modification is found at Lys277. A Glycyl lysine isopeptide (Lys-Gly) (interchain with G-Cter in ubiquitin); alternate cross-link involves residue Lys277. The beta stranded transmembrane segment at 284 to 293 threads the bilayer; sequence HKLGLALELE.

It belongs to the eukaryotic mitochondrial porin family. Monomer, homodimer and higher order oligomers; formation of higher order structures is necessary for scramblase activity. Interacts with ARMC12 in a TBC1D21-dependent manner. Interacts with KLC3. Interacts with SPATA33. Interacts with PPP3CC in a SPATA33-dependent manner. Post-translationally, ubiquitinated by PRKN during mitophagy, leading to its degradation and enhancement of mitophagy. Deubiquitinated by USP30.

It localises to the mitochondrion outer membrane. It is found in the membrane. The catalysed reaction is chloride(in) = chloride(out). It catalyses the reaction K(+)(in) = K(+)(out). The enzyme catalyses a 1,2-diacyl-sn-glycero-3-phospho-L-serine(in) = a 1,2-diacyl-sn-glycero-3-phospho-L-serine(out). It carries out the reaction a 1,2-diacyl-sn-glycero-3-phosphocholine(in) = a 1,2-diacyl-sn-glycero-3-phosphocholine(out). The catalysed reaction is a 1,2-diacyl-sn-glycero-3-phospho-(1D-myo-inositol)(in) = a 1,2-diacyl-sn-glycero-3-phospho-(1D-myo-inositol)(out). In terms of biological role, non-selective voltage-gated ion channel that mediates the transport of anions and cations through the mitochondrion outer membrane and plasma membrane. The channel adopts an open conformation at zero mV and a closed conformation at both positive and negative potentials. There are two populations of channels; the main that functions in a lower open-state conductance with lower ion selectivity, that switch, in a voltage-dependent manner, from the open to a low-conducting 'closed' state and the other that has a normal ion selectivity in the typical high conductance, 'open' state. Binds various lipids, including the sphingolipid ceramide, the phospholipid phosphatidylcholine, and the sterols cholesterol and oxysterol. Binding of ceramide promotes the mitochondrial outer membrane permeabilization (MOMP) apoptotic pathway. Its function is as follows. Catalyzes the scrambling of phospholipids across the outer mitochondrial membrane; the mechanism is unrelated to channel activity and is capable of translocating both anionic and zwitterionic phospholipids. The sequence is that of Non-selective voltage-gated ion channel VDAC2 from Oryctolagus cuniculus (Rabbit).